The chain runs to 1405 residues: DNA-directed RNA polymerase subunit beta' (1405 aa).

4 residues coordinate Zn(2+): Cys-70, Cys-72, Cys-85, and Cys-88. Mg(2+)-binding residues include Asp-460, Asp-462, and Asp-464. Zn(2+) is bound by residues Cys-814, Cys-888, Cys-895, and Cys-898.

The protein belongs to the RNA polymerase beta' chain family. The RNAP catalytic core consists of 2 alpha, 1 beta, 1 beta' and 1 omega subunit. When a sigma factor is associated with the core the holoenzyme is formed, which can initiate transcription. The cofactor is Mg(2+). Zn(2+) is required as a cofactor.

The enzyme catalyses RNA(n) + a ribonucleoside 5'-triphosphate = RNA(n+1) + diphosphate. In terms of biological role, DNA-dependent RNA polymerase catalyzes the transcription of DNA into RNA using the four ribonucleoside triphosphates as substrates. The chain is DNA-directed RNA polymerase subunit beta' from Shewanella baltica (strain OS223).